We begin with the raw amino-acid sequence, 426 residues long: Putative nickel insertion protein (426 aa).

It belongs to the LarC family.

The protein is Putative nickel insertion protein of Nostoc sp. (strain PCC 7120 / SAG 25.82 / UTEX 2576).